We begin with the raw amino-acid sequence, 876 residues long: MAPLHESLSSINDVIESKPLFVPITKPILQPNSFNLSEGSLCAKDSTPILFDVPQNVTFTPFSSHSISTDAPLPILLRVQANAHKGGFLGFTKESPSDRLTNSLGRFEDREFLSLFRFKMWWSTAWIGKSGSDLQAETQWVMLKIPEIDSYVAIIPTIEGAFRASLTPGEKGNVLICAESGSTKVKESSFKSIAYIHICDNPYNLMKEAFSALRVHMNTFKLLEEKKLPKIVDKFGWCTWDACYLTVDPATIWTGVKEFEDGGVCPKFVIIDDGWQSINFDGDELDKDAENLVLGGEQMTARLTSFKECKKFRNYKGGSFITSDASHFNPLKPKMLIYKATERIQAIILRRKLVKESGEQDLTELDEKIKILSEELNAMFDEVEKEESLGSDDVSGSGMAAFTKDLRLRFKSLDDIYVWHALCGAWNGVRPETMMDLKAKVAPFELSPSLGATMADLAVDKVVEAGIGLVHPSKAHEFYDSMHSYLASVGVTGAKIDVFQTLESLAEEHGGRVELAKAYYDGLTESMIKNFNGTDVIASMQQCNEFFFLATKQISIGRVGDDFWWQDPYGDPQGVYWLQGVHMIHCSYNSIWMGQMIQPDWDMFQSDHVCAEYHAASRAICGGPVYLSDHLGKASHNFDLIKKLAFFDGTIPRCVHYALPTRDSLFKNPLFDKESILKIFNFNKFGGVIGTFNCQGAGWSPEEHRFKGYKECYTTVSGTVHVSDIEWDQNPEAAGSQVTYTGDYLVYKQQSEEILFMNSKSEAMKITLEPSAFDLLSFVPVTELVSSGVRFAPLGLINMFNCVGTVQDMKVTGDNSIRVDVKGEGRFMAYSSSAPVKCYLNDKEAEFKWEEETGKLSFFVPWVEESGGISHLSFTF.

Phosphoserine is present on residues Ser-7 and Ser-9.

It belongs to the glycosyl hydrolases 36 family.

The enzyme catalyses alpha-D-galactosyl-(1-&gt;3)-1D-myo-inositol + sucrose = raffinose + myo-inositol. Transglycosidase operating by a ping-pong reaction mechanism. Involved in the synthesis of raffinose, a major soluble carbohydrate in seeds, roots and tubers. This is Probable galactinol--sucrose galactosyltransferase 4 (RFS4) from Arabidopsis thaliana (Mouse-ear cress).